Consider the following 121-residue polypeptide: Large ribosomal subunit protein uL14c (121 aa).

Belongs to the universal ribosomal protein uL14 family. As to quaternary structure, part of the 50S ribosomal subunit.

The protein resides in the plastid. It localises to the chloroplast. Functionally, binds to 23S rRNA. This chain is Large ribosomal subunit protein uL14c, found in Nephroselmis olivacea (Green alga).